A 370-amino-acid chain; its full sequence is MGDRRFIDFQFQDLNSSLRPRLGNATANNTCIVDDSFKYNLNGAVYSVVFILGLITNSASLFVFCFRMKMRSETAIFITNLALSDLLFVCTLPFKIFYNFNRHWPFGDTLCKISGTAFLTNIYGSMLFLTCISVDRFLAIVYPFRSRTIRTRRNSAIVCAGVWILVLSGGISASLFSTTNVNNATTTCFEGFSKRVWKTYLSKITIFIEVVGFIIPLILNVSCSSVVLRTLRKPATLSQIGTNKKKVLKMITVHMAVFVVCFVPYNSVLFLYALVRSQAITNCLLERFAKIMYPITLCLATLNCCFDPFIYYFTLESFQKSFYINTHIRMESLFKTETPLTPKPSLPAIQEEVSDQTTNNGGELMLESTF.

At 1 to 43 (MGDRRFIDFQFQDLNSSLRPRLGNATANNTCIVDDSFKYNLNG) the chain is on the extracellular side. Asn15, Asn24, and Asn28 each carry an N-linked (GlcNAc...) asparagine glycan. Residues 44–64 (AVYSVVFILGLITNSASLFVF) form a helical membrane-spanning segment. Over 65-73 (CFRMKMRSE) the chain is Cytoplasmic. A helical membrane pass occupies residues 74–94 (TAIFITNLALSDLLFVCTLPF). Residues 95–112 (KIFYNFNRHWPFGDTLCK) are Extracellular-facing. The cysteines at positions 111 and 188 are disulfide-linked. Residues 113–133 (ISGTAFLTNIYGSMLFLTCIS) form a helical membrane-spanning segment. The Cytoplasmic portion of the chain corresponds to 134–155 (VDRFLAIVYPFRSRTIRTRRNS). A helical membrane pass occupies residues 156–176 (AIVCAGVWILVLSGGISASLF). Residues 177-203 (STTNVNNATTTCFEGFSKRVWKTYLSK) lie on the Extracellular side of the membrane. Asn183 carries an N-linked (GlcNAc...) asparagine glycan. A helical transmembrane segment spans residues 204-224 (ITIFIEVVGFIIPLILNVSCS). Over 225–254 (SVVLRTLRKPATLSQIGTNKKKVLKMITVH) the chain is Cytoplasmic. Residues 255 to 275 (MAVFVVCFVPYNSVLFLYALV) traverse the membrane as a helical segment. Residues 276–294 (RSQAITNCLLERFAKIMYP) are Extracellular-facing. A helical transmembrane segment spans residues 295–315 (ITLCLATLNCCFDPFIYYFTL). At 316-370 (ESFQKSFYINTHIRMESLFKTETPLTPKPSLPAIQEEVSDQTTNNGGELMLESTF) the chain is on the cytoplasmic side.

It belongs to the G-protein coupled receptor 1 family.

The protein localises to the cell membrane. Receptor for lysophosphatidic acid (LPA), a mediator of diverse cellular activities. Transduces a signal by increasing the intracellular calcium ions and by stimulating adenylyl cyclase activity. The rank order of potency for agonists of this receptor is 1-oleoyl- &gt; 1-stearoyl- &gt; 1-palmitoyl- &gt; 1-myristoyl- &gt; 1-alkyl- &gt; 1-alkenyl-LPA. In Mus musculus (Mouse), this protein is Lysophosphatidic acid receptor 4 (Lpar4).